A 651-amino-acid chain; its full sequence is Acetyl-coenzyme A synthetase (651 aa).

CoA is bound by residues 191 to 194, threonine 311, and asparagine 335; that span reads RGGK. ATP contacts are provided by residues 387–389, 411–416, aspartate 500, and arginine 515; these read GEP and DTWWQT. Serine 523 contributes to the CoA binding site. Arginine 526 lines the ATP pocket. Residues valine 537, histidine 539, and valine 542 each contribute to the Mg(2+) site. Arginine 584 is a CoA binding site. At lysine 609 the chain carries N6-acetyllysine.

The protein belongs to the ATP-dependent AMP-binding enzyme family. Mg(2+) is required as a cofactor. In terms of processing, acetylated. Deacetylation by the SIR2-homolog deacetylase activates the enzyme.

It catalyses the reaction acetate + ATP + CoA = acetyl-CoA + AMP + diphosphate. In terms of biological role, catalyzes the conversion of acetate into acetyl-CoA (AcCoA), an essential intermediate at the junction of anabolic and catabolic pathways. AcsA undergoes a two-step reaction. In the first half reaction, AcsA combines acetate with ATP to form acetyl-adenylate (AcAMP) intermediate. In the second half reaction, it can then transfer the acetyl group from AcAMP to the sulfhydryl group of CoA, forming the product AcCoA. The polypeptide is Acetyl-coenzyme A synthetase (Pseudomonas syringae pv. tomato (strain ATCC BAA-871 / DC3000)).